A 147-amino-acid chain; its full sequence is UPF0047 protein sll1880 (147 aa).

It belongs to the UPF0047 family.

The chain is UPF0047 protein sll1880 from Synechocystis sp. (strain ATCC 27184 / PCC 6803 / Kazusa).